Here is a 1383-residue protein sequence, read N- to C-terminus: DNA-directed RNA polymerase subunit beta'' (1383 aa).

Positions 220, 289, 296, and 299 each coordinate Zn(2+).

The protein belongs to the RNA polymerase beta' chain family. RpoC2 subfamily. As to quaternary structure, in plastids the minimal PEP RNA polymerase catalytic core is composed of four subunits: alpha, beta, beta', and beta''. When a (nuclear-encoded) sigma factor is associated with the core the holoenzyme is formed, which can initiate transcription. Zn(2+) is required as a cofactor.

It localises to the plastid. It is found in the chloroplast. It catalyses the reaction RNA(n) + a ribonucleoside 5'-triphosphate = RNA(n+1) + diphosphate. In terms of biological role, DNA-dependent RNA polymerase catalyzes the transcription of DNA into RNA using the four ribonucleoside triphosphates as substrates. This is DNA-directed RNA polymerase subunit beta'' from Oenothera biennis (German evening primrose).